Reading from the N-terminus, the 323-residue chain is Pathogenicity locus probable regulatory protein WtsA (323 aa).

A Sigma-54 factor interaction domain is found at Val-41 to Thr-251. Residues Gly-52–Asp-59 and Glu-123–Gln-132 contribute to the ATP site. A DNA-binding region (H-T-H motif) is located at residues Ile-293–Lys-312.

Its function is as follows. Positive activator of wtsB involved in plant pathogenicity. Probably interacts with sigma-54. The sequence is that of Pathogenicity locus probable regulatory protein WtsA (wtsA) from Pantoea stewartii subsp. stewartii (Erwinia stewartii).